A 285-amino-acid chain; its full sequence is tRNA (adenine(58)-N(1))-methyltransferase catalytic subunit TRMT61A (285 aa).

Serine 2 carries the N-acetylserine modification. 5 substrate regions span residues 20–22 (LGH), 35–42 (QTQTRHGV), 64–65 (GW), 85–89 (QILYS), and 110–117 (SGTGSGSV). S-adenosyl-L-methionine is bound by residues leucine 87, 114 to 116 (SGS), glutamate 135, arginine 140, 163 to 164 (DV), and aspartate 181. 2 substrate regions span residues 180 to 183 (LDIP) and 205 to 212 (SFSPCIEQ). Threonine 274 provides a ligand contact to substrate.

The protein belongs to the class I-like SAM-binding methyltransferase superfamily. TRM61 family. As to quaternary structure, heterotetramer; composed of two copies of TRMT6 and two copies of TRMT61A.

Its subcellular location is the nucleus. It catalyses the reaction adenosine(58) in tRNA + S-adenosyl-L-methionine = N(1)-methyladenosine(58) in tRNA + S-adenosyl-L-homocysteine + H(+). The enzyme catalyses an adenosine in mRNA + S-adenosyl-L-methionine = an N(1)-methyladenosine in mRNA + S-adenosyl-L-homocysteine + H(+). Catalytic subunit of tRNA (adenine-N(1)-)-methyltransferase, which catalyzes the formation of N(1)-methyladenine at position 58 (m1A58) in initiator methionyl-tRNA. Catalytic subunit of mRNA N(1)-methyltransferase complex, which mediates methylation of adenosine residues at the N(1) position of a small subset of mRNAs: N(1) methylation takes place in tRNA T-loop-like structures of mRNAs and is only present at low stoichiometries. This is tRNA (adenine(58)-N(1))-methyltransferase catalytic subunit TRMT61A (TRMT61A) from Bos taurus (Bovine).